We begin with the raw amino-acid sequence, 31 residues long: Photosystem II reaction center protein T (31 aa).

Residues 3–23 (SAAYILVLALALGVIFFAIAF) traverse the membrane as a helical segment.

Belongs to the PsbT family. PSII is composed of 1 copy each of membrane proteins PsbA, PsbB, PsbC, PsbD, PsbE, PsbF, PsbH, PsbI, PsbJ, PsbK, PsbL, PsbM, PsbT, PsbX, PsbY, PsbZ, Psb30/Ycf12, peripheral proteins PsbO, CyanoQ (PsbQ), PsbU, PsbV and a large number of cofactors. It forms dimeric complexes.

Its subcellular location is the cellular thylakoid membrane. In terms of biological role, found at the monomer-monomer interface of the photosystem II (PS II) dimer, plays a role in assembly and dimerization of PSII. PSII is a light-driven water plastoquinone oxidoreductase, using light energy to abstract electrons from H(2)O, generating a proton gradient subsequently used for ATP formation. The sequence is that of Photosystem II reaction center protein T from Trichodesmium erythraeum (strain IMS101).